The chain runs to 229 residues: ATPase SWSAP1 (229 aa).

The interval 209–229 (PWPTQAGDPSSGKGSSSGGQP) is disordered.

Interacts with ZSWIM7; they form a functional complex involved in homologous recombination repair and stabilize each other. Interacts with RAD51, RAD51B, RAD51C, RAD51D and XRCC3; involved in homologous recombination repair.

The protein resides in the nucleus. ATPase which is preferentially stimulated by single-stranded DNA and is involved in homologous recombination repair (HRR). Has a DNA-binding activity which is independent of its ATPase activity. This Homo sapiens (Human) protein is ATPase SWSAP1 (SWSAP1).